The sequence spans 107 residues: Ig kappa chain V-VI region SAPC 10 (107 aa).

The framework-1 stretch occupies residues 1–23 (EIVLTQSPAITAASLGQKVTITC). A disulfide bond links Cys-23 and Cys-87. A complementarity-determining-1 region spans residues 24 to 33 (SASSSVSYMH). The interval 34-48 (WYQQKSGTSPKPWIY) is framework-2. Residues 49 to 55 (EISKLAS) form a complementarity-determining-2 region. A framework-3 region spans residues 56–87 (GVPARFSGSGSGTSYSLTISSMEAEDAAIYYC). Positions 88–96 (QQWNYPLIT) are complementarity-determining-3. The segment at 97–106 (FGGGTKLEIK) is framework-4.

The chain is Ig kappa chain V-VI region SAPC 10 from Mus musculus (Mouse).